A 357-amino-acid polypeptide reads, in one-letter code: Prostaglandin E2 receptor EP2 subtype (357 aa).

Residues 1–24 are Extracellular-facing; the sequence is MDNSFNDSRRVENCESRQYLLSDE. A glycan (N-linked (GlcNAc...) asparagine) is linked at Asn6. The helical transmembrane segment at 25–48 threads the bilayer; that stretch reads SPAISSVMFTAGVLGNLIALALLA. The Cytoplasmic portion of the chain corresponds to 49 to 66; the sequence is RRWRGDTGCSAGSRTSIS. The chain crosses the membrane as a helical span at residues 67 to 92; it reads LFHVLVTELVLTDLLGTCLISPVVLA. Residues 93–112 are Extracellular-facing; it reads SYSRNQTLVALAPESRACTY. A disulfide bridge connects residues Cys110 and Cys188. Residues 113 to 133 traverse the membrane as a helical segment; the sequence is FAFTMTFFSLATMLMLFAMAL. Topologically, residues 134 to 152 are cytoplasmic; it reads ERYLAIGHPYFYRRRVSRR. The helical transmembrane segment at 153 to 177 threads the bilayer; sequence GGLAVLPAIYGVSLLFCSLPLLNYG. Over 178–199 the chain is Extracellular; the sequence is EYVQYCPGTWCFIQHGRTAYLQ. A helical transmembrane segment spans residues 200-224; sequence LYATVLLLLIVAVLGCNISVILNLI. Residues 225-262 lie on the Cytoplasmic side of the membrane; that stretch reads RMQLRSKRSRCGLSGSSLRGPGSRRRGERTSMAEETDH. Residues 235-245 show a composition bias toward low complexity; it reads CGLSGSSLRGP. The disordered stretch occupies residues 235 to 255; it reads CGLSGSSLRGPGSRRRGERTS. The chain crosses the membrane as a helical span at residues 263-286; sequence LILLAIMTITFAVCSLPFTIFAYM. The Extracellular segment spans residues 287–299; sequence DETSSRKEKWDLR. A helical transmembrane segment spans residues 300–323; sequence ALRFLSVNSIIDPWVFVILRPPVL. At 324–357 the chain is on the cytoplasmic side; that stretch reads RLMRSVLCCRTSLRAPEAPGASCSTQQTDLCGQL.

It belongs to the G-protein coupled receptor 1 family.

The protein localises to the cell membrane. Functionally, receptor for prostaglandin E2 (PGE2). The activity of this receptor is mediated by G(s) proteins that stimulate adenylate cyclase. The subsequent raise in intracellular cAMP is responsible for the relaxing effect of this receptor on smooth muscle. This Rattus norvegicus (Rat) protein is Prostaglandin E2 receptor EP2 subtype (Ptger2).